The chain runs to 418 residues: Serine hydroxymethyltransferase (418 aa).

Residues Leu-121 and 125–127 each bind (6S)-5,6,7,8-tetrahydrofolate; that span reads GHL. An N6-(pyridoxal phosphate)lysine modification is found at Lys-230. Residues Glu-246 and 355–357 each bind (6S)-5,6,7,8-tetrahydrofolate; that span reads SPF.

This sequence belongs to the SHMT family. In terms of assembly, homodimer. It depends on pyridoxal 5'-phosphate as a cofactor.

The protein resides in the cytoplasm. It carries out the reaction (6R)-5,10-methylene-5,6,7,8-tetrahydrofolate + glycine + H2O = (6S)-5,6,7,8-tetrahydrofolate + L-serine. It functions in the pathway one-carbon metabolism; tetrahydrofolate interconversion. The protein operates within amino-acid biosynthesis; glycine biosynthesis; glycine from L-serine: step 1/1. In terms of biological role, catalyzes the reversible interconversion of serine and glycine with tetrahydrofolate (THF) serving as the one-carbon carrier. This reaction serves as the major source of one-carbon groups required for the biosynthesis of purines, thymidylate, methionine, and other important biomolecules. Also exhibits THF-independent aldolase activity toward beta-hydroxyamino acids, producing glycine and aldehydes, via a retro-aldol mechanism. In Streptococcus pneumoniae serotype 4 (strain ATCC BAA-334 / TIGR4), this protein is Serine hydroxymethyltransferase.